The chain runs to 1241 residues: ATP-dependent helicase/nuclease subunit A (1241 aa).

Residues 12–485 form the UvrD-like helicase ATP-binding domain; the sequence is SQWTDDQWKA…IDLAKNFRSR (474 aa). 33-40 is a binding site for ATP; the sequence is AAAGSGKT. Positions 505–805 constitute a UvrD-like helicase C-terminal domain; it reads GEIDYDADAE…RIMTIHKSKG (301 aa).

The protein belongs to the helicase family. AddA subfamily. As to quaternary structure, heterodimer of AddA and AddB/RexB. The cofactor is Mg(2+).

It carries out the reaction Couples ATP hydrolysis with the unwinding of duplex DNA by translocating in the 3'-5' direction.. The enzyme catalyses ATP + H2O = ADP + phosphate + H(+). The heterodimer acts as both an ATP-dependent DNA helicase and an ATP-dependent, dual-direction single-stranded exonuclease. Recognizes the chi site generating a DNA molecule suitable for the initiation of homologous recombination. The AddA nuclease domain is required for chi fragment generation; this subunit has the helicase and 3' -&gt; 5' nuclease activities. This chain is ATP-dependent helicase/nuclease subunit A, found in Bacillus cereus (strain ATCC 10987 / NRS 248).